Consider the following 485-residue polypeptide: MYRSRLGNDLSDITLDYVSSIDDDAAITFYDIVGSQAHVLMLYQQKIITKSDAKKILSSLESLKDETFDSSSGAEDIHELIEALVIKRAGMSSGGKMHTARSRNDQVVLDIRMKIRDDINIICNCLLDTIEALVSVAKNHQKTIMPLYTHLQQAQAGLFSHYLLAHADVLSRDFQRLYGTFERINQSPLGAGPVGGTSISIDRRSTAKMLGFDDVVENSIDATSTRDFVAEYVSMVSILMTNLSKIAEDFVIWSTSEFSFIELSDEFTSPSSVMPQKKNPDILELTRGKTSEVIGNLTAILTTVKGLASGYGRDLQQIKSSIWSTSKISISALLIFKSMLLTLKVNEKQMKKVTESSNLIALDIAEKLVQEGIPFRVTHKIAGSLTQLAHLSKKPISKLTPSDIKKSVADTKVDPKLVLEIISSITVVSSLKERKSYGSSGYDEQKRMISDRLKKINDFRTDLTHRENKINSSLEDLKKQIDEII.

The protein belongs to the lyase 1 family. Argininosuccinate lyase subfamily.

It is found in the cytoplasm. It catalyses the reaction 2-(N(omega)-L-arginino)succinate = fumarate + L-arginine. The protein operates within amino-acid biosynthesis; L-arginine biosynthesis; L-arginine from L-ornithine and carbamoyl phosphate: step 3/3. This is Argininosuccinate lyase from Nitrosopumilus maritimus (strain SCM1).